Here is a 179-residue protein sequence, read N- to C-terminus: uncharacterized protein (179 aa).

Residues 21 to 109 (QQDAVILVDV…WKQAGLPTVK (89 aa)) form the Rhodanese domain. 2 helical membrane passes run 115–135 (ISIM…GVLL) and 138–158 (FVAP…LFAG).

The protein resides in the cell membrane. This is an uncharacterized protein from Synechocystis sp. (strain ATCC 27184 / PCC 6803 / Kazusa).